Consider the following 78-residue polypeptide: Nucleocapsid VP1 (78 aa).

As to quaternary structure, homodimer.

It is found in the virion. Completely wraps the viral circular dsDNA genome to form a nucleoprotein filament. These interactions between the viral genome and the nucleocapsid proteins probably maintain the DNA in A-form. This certainly protects the viral DNA under conditions such as the extreme desiccation of its host. The protein is Nucleocapsid VP1 of Sulfolobus (SPV1).